We begin with the raw amino-acid sequence, 352 residues long: UDP-N-acetylglucosamine--N-acetylmuramyl-(pentapeptide) pyrophosphoryl-undecaprenol N-acetylglucosamine transferase (352 aa).

Residues 11–13 (TGG), asparagine 120, arginine 161, serine 188, and glutamine 286 each bind UDP-N-acetyl-alpha-D-glucosamine.

This sequence belongs to the glycosyltransferase 28 family. MurG subfamily.

Its subcellular location is the cell inner membrane. The enzyme catalyses di-trans,octa-cis-undecaprenyl diphospho-N-acetyl-alpha-D-muramoyl-L-alanyl-D-glutamyl-meso-2,6-diaminopimeloyl-D-alanyl-D-alanine + UDP-N-acetyl-alpha-D-glucosamine = di-trans,octa-cis-undecaprenyl diphospho-[N-acetyl-alpha-D-glucosaminyl-(1-&gt;4)]-N-acetyl-alpha-D-muramoyl-L-alanyl-D-glutamyl-meso-2,6-diaminopimeloyl-D-alanyl-D-alanine + UDP + H(+). It functions in the pathway cell wall biogenesis; peptidoglycan biosynthesis. Functionally, cell wall formation. Catalyzes the transfer of a GlcNAc subunit on undecaprenyl-pyrophosphoryl-MurNAc-pentapeptide (lipid intermediate I) to form undecaprenyl-pyrophosphoryl-MurNAc-(pentapeptide)GlcNAc (lipid intermediate II). This is UDP-N-acetylglucosamine--N-acetylmuramyl-(pentapeptide) pyrophosphoryl-undecaprenol N-acetylglucosamine transferase from Prochlorococcus marinus (strain NATL2A).